The primary structure comprises 1055 residues: DNA-directed RNA polymerase subunit beta' (1055 aa).

Zn(2+) is bound by residues C60, C62, C75, and C78. Positions 449, 451, and 453 each coordinate Mg(2+). Positions 818, 892, 899, and 902 each coordinate Zn(2+).

This sequence belongs to the RNA polymerase beta' chain family. The RNAP catalytic core consists of 2 alpha, 1 beta, 1 beta' and 1 omega subunit. When a sigma factor is associated with the core the holoenzyme is formed, which can initiate transcription. It depends on Mg(2+) as a cofactor. Requires Zn(2+) as cofactor.

The enzyme catalyses RNA(n) + a ribonucleoside 5'-triphosphate = RNA(n+1) + diphosphate. Its function is as follows. DNA-dependent RNA polymerase catalyzes the transcription of DNA into RNA using the four ribonucleoside triphosphates as substrates. In Pediococcus acidilactici, this protein is DNA-directed RNA polymerase subunit beta'.